A 192-amino-acid polypeptide reads, in one-letter code: Pyridoxal 5'-phosphate synthase subunit PdxT (192 aa).

47–49 is a binding site for L-glutamine; it reads GES. The active-site Nucleophile is C78. L-glutamine-binding positions include R105 and 139–140; that span reads IR. Catalysis depends on charge relay system residues H175 and E177.

The protein belongs to the glutaminase PdxT/SNO family. In terms of assembly, in the presence of PdxS, forms a dodecamer of heterodimers. Only shows activity in the heterodimer.

The catalysed reaction is aldehydo-D-ribose 5-phosphate + D-glyceraldehyde 3-phosphate + L-glutamine = pyridoxal 5'-phosphate + L-glutamate + phosphate + 3 H2O + H(+). The enzyme catalyses L-glutamine + H2O = L-glutamate + NH4(+). It participates in cofactor biosynthesis; pyridoxal 5'-phosphate biosynthesis. In terms of biological role, catalyzes the hydrolysis of glutamine to glutamate and ammonia as part of the biosynthesis of pyridoxal 5'-phosphate. The resulting ammonia molecule is channeled to the active site of PdxS. In Solibacter usitatus (strain Ellin6076), this protein is Pyridoxal 5'-phosphate synthase subunit PdxT.